A 177-amino-acid polypeptide reads, in one-letter code: ATP synthase subunit b, chloroplastic (177 aa).

A helical membrane pass occupies residues I22–G42.

The protein belongs to the ATPase B chain family. As to quaternary structure, F-type ATPases have 2 components, F(1) - the catalytic core - and F(0) - the membrane proton channel. F(1) has five subunits: alpha(3), beta(3), gamma(1), delta(1), epsilon(1). F(0) has four main subunits: a(1), b(1), b'(1) and c(10-14). The alpha and beta chains form an alternating ring which encloses part of the gamma chain. F(1) is attached to F(0) by a central stalk formed by the gamma and epsilon chains, while a peripheral stalk is formed by the delta, b and b' chains.

It is found in the plastid. It localises to the chloroplast thylakoid membrane. Its function is as follows. F(1)F(0) ATP synthase produces ATP from ADP in the presence of a proton or sodium gradient. F-type ATPases consist of two structural domains, F(1) containing the extramembraneous catalytic core and F(0) containing the membrane proton channel, linked together by a central stalk and a peripheral stalk. During catalysis, ATP synthesis in the catalytic domain of F(1) is coupled via a rotary mechanism of the central stalk subunits to proton translocation. Functionally, component of the F(0) channel, it forms part of the peripheral stalk, linking F(1) to F(0). The chain is ATP synthase subunit b, chloroplastic from Oedogonium cardiacum (Filamentous green alga).